Here is a 544-residue protein sequence, read N- to C-terminus: MAAKNIKYNEDARKKIHKGVKTLAEAVKVTLGPKGRHVVIDKSFGSPQVTKDGVTVAKEIELEDKHENMGAQMVKEVASKTADKAGDGTTTATVLAEAIYSEGLRNVTAGANPMDLKRGIDKAVKVVVDEIKKISKPVQHHKEIAQVATISANNDAEIGNLIAEAMEKVGKNGSITVEEAKGFETVLDVVEGMNFNRGYLSSYFSTNPETQECVLEEALVLIYDKKISGIKDFLPVLQQVAESGRPLLIIAEDIEGEALATLVVNRLRAGFRVCAVKAPGFGDRRKAMLEDIAILTGGQLISEELGMKLENTTLAMLGKAKKVIVSKEDTTIVEGLGSKEDIESRCESIKKQIEDSTSDYDKEKLQERLAKLSGGVAVIRVGAATEIEMKEKKDRVDDAQHATLAAVEEGILPGGGTALVRCIPTLEAFIPILTNEDEQIGARIVLKALSAPLKQIAANAGKEGAIICQQVLSRSSSEGYDALRDAYTDMIEAGILDPTKVTRCALESAASVAGLLLTTEALIADIPEEKSSSAPAMPGAGMDY.

Residues 30 to 33, lysine 51, 87 to 91, glycine 415, 481 to 483, and aspartate 497 contribute to the ATP site; these read TLGP, DGTTT, and DAL.

The protein belongs to the chaperonin (HSP60) family. In terms of assembly, forms a cylinder of 14 subunits composed of two heptameric rings stacked back-to-back. Interacts with the co-chaperonin GroES.

It localises to the cytoplasm. The catalysed reaction is ATP + H2O + a folded polypeptide = ADP + phosphate + an unfolded polypeptide.. Functionally, together with its co-chaperonin GroES, plays an essential role in assisting protein folding. The GroEL-GroES system forms a nano-cage that allows encapsulation of the non-native substrate proteins and provides a physical environment optimized to promote and accelerate protein folding. The polypeptide is Chaperonin GroEL 1 (Chlamydia caviae (strain ATCC VR-813 / DSM 19441 / 03DC25 / GPIC) (Chlamydophila caviae)).